Consider the following 456-residue polypeptide: MLNSAMSVVILAAGKGTRMYSDIPKVLHTLAGKPMVQHVIDAATKLGAAQVHLVYGHGGELLKQTLKDDKLNWVLQAEQLGTGHAMQQAAPFFSDDEDILMLYGDVPLISVETLQRLRDAKPQGGIGLLTVKLDDPSGYGRITRENGKVTGIVEHKDATDEQRQIQEINTGILIANGADMKRWLSKLTNNNAQGEYYITDIIALAYQEGREIAAVHPARISETDGVNNRLQLSRLERIYQAEQAEKLLLSGVMLRDPARFDLRGTLHCGMDVEIDANVIIEGYVTLGHRVKIGAGCIIKNSVIGDDCEISPYSVVEDAHLEAACTIGPFARLRPGAELLAGAHVGNFVEMKKARLGKGSKAGHLTYLGDAEIGDNVNIGAGTITCNYDGANKFKTVIGDDVFVGSDTQLVAPVTVGKGATIAAGTTVTRNVADNELVLSRVPQVHKQGWQRPVKKK.

The tract at residues 1–229 is pyrophosphorylase; that stretch reads MLNSAMSVVI…ISETDGVNNR (229 aa). UDP-N-acetyl-alpha-D-glucosamine contacts are provided by residues 11–14, Lys-25, Gln-76, 81–82, 103–105, Gly-140, Glu-154, Asn-169, and Asn-227; these read LAAG, GT, and YGD. Asp-105 serves as a coordination point for Mg(2+). A Mg(2+)-binding site is contributed by Asn-227. Positions 230–250 are linker; the sequence is LQLSRLERIYQAEQAEKLLLS. Residues 251 to 456 are N-acetyltransferase; that stretch reads GVMLRDPARF…QGWQRPVKKK (206 aa). UDP-N-acetyl-alpha-D-glucosamine is bound by residues Arg-333 and Lys-351. The Proton acceptor role is filled by His-363. Residues Tyr-366 and Asn-377 each coordinate UDP-N-acetyl-alpha-D-glucosamine. Acetyl-CoA is bound by residues Ala-380, 386–387, Ser-405, Ala-423, and Arg-440; that span reads NY.

In the N-terminal section; belongs to the N-acetylglucosamine-1-phosphate uridyltransferase family. The protein in the C-terminal section; belongs to the transferase hexapeptide repeat family. As to quaternary structure, homotrimer. It depends on Mg(2+) as a cofactor.

It is found in the cytoplasm. It carries out the reaction alpha-D-glucosamine 1-phosphate + acetyl-CoA = N-acetyl-alpha-D-glucosamine 1-phosphate + CoA + H(+). It catalyses the reaction N-acetyl-alpha-D-glucosamine 1-phosphate + UTP + H(+) = UDP-N-acetyl-alpha-D-glucosamine + diphosphate. Its pathway is nucleotide-sugar biosynthesis; UDP-N-acetyl-alpha-D-glucosamine biosynthesis; N-acetyl-alpha-D-glucosamine 1-phosphate from alpha-D-glucosamine 6-phosphate (route II): step 2/2. It functions in the pathway nucleotide-sugar biosynthesis; UDP-N-acetyl-alpha-D-glucosamine biosynthesis; UDP-N-acetyl-alpha-D-glucosamine from N-acetyl-alpha-D-glucosamine 1-phosphate: step 1/1. The protein operates within bacterial outer membrane biogenesis; LPS lipid A biosynthesis. Functionally, catalyzes the last two sequential reactions in the de novo biosynthetic pathway for UDP-N-acetylglucosamine (UDP-GlcNAc). The C-terminal domain catalyzes the transfer of acetyl group from acetyl coenzyme A to glucosamine-1-phosphate (GlcN-1-P) to produce N-acetylglucosamine-1-phosphate (GlcNAc-1-P), which is converted into UDP-GlcNAc by the transfer of uridine 5-monophosphate (from uridine 5-triphosphate), a reaction catalyzed by the N-terminal domain. The sequence is that of Bifunctional protein GlmU from Salmonella heidelberg (strain SL476).